The following is a 152-amino-acid chain: MMKHIDLKILDNRIGREFPLPTYATTGSAGLDLRALIDSAITVEAGQTVLIPTGISVYIADPNLAAVILPRSGLGHKNGIVLGNLVGLIDSDYQGPLMVSIWNRSDKPFTIEVGDRIAQLVFVPVVQASFNIVTDFEQTSRGEGGFGHSGKQ.

Residues 71–73 (RSG), Asn-84, 88–90 (LID), and Met-98 each bind substrate.

Belongs to the dUTPase family. Mg(2+) serves as cofactor.

The catalysed reaction is dUTP + H2O = dUMP + diphosphate + H(+). It participates in pyrimidine metabolism; dUMP biosynthesis; dUMP from dCTP (dUTP route): step 2/2. Functionally, this enzyme is involved in nucleotide metabolism: it produces dUMP, the immediate precursor of thymidine nucleotides and it decreases the intracellular concentration of dUTP so that uracil cannot be incorporated into DNA. This is Deoxyuridine 5'-triphosphate nucleotidohydrolase from Haemophilus ducreyi (strain 35000HP / ATCC 700724).